A 235-amino-acid polypeptide reads, in one-letter code: Uridylate kinase (235 aa).

9–12 provides a ligand contact to ATP; that stretch reads KLSG. The involved in allosteric activation by GTP stretch occupies residues 17–22; that stretch reads GKDGYG. UMP is bound at residue glycine 51. The ATP site is built by glycine 52 and arginine 56. Residues aspartate 71 and 132-139 contribute to the UMP site; that span reads TGNPYFTT. The ATP site is built by threonine 159, tyrosine 165, and aspartate 168.

This sequence belongs to the UMP kinase family. As to quaternary structure, homohexamer.

It is found in the cytoplasm. The catalysed reaction is UMP + ATP = UDP + ADP. Its pathway is pyrimidine metabolism; CTP biosynthesis via de novo pathway; UDP from UMP (UMPK route): step 1/1. Its activity is regulated as follows. Allosterically activated by GTP. Inhibited by UTP. Its function is as follows. Catalyzes the reversible phosphorylation of UMP to UDP. This chain is Uridylate kinase, found in Chlorobium luteolum (strain DSM 273 / BCRC 81028 / 2530) (Pelodictyon luteolum).